A 128-amino-acid polypeptide reads, in one-letter code: Cytochrome c-type biogenesis protein CcmE (128 aa).

Over 1-8 (MQKIVRNR) the chain is Cytoplasmic. A helical; Signal-anchor for type II membrane protein transmembrane segment spans residues 9 to 29 (LIKIIICFCSACLGISIILYN). Topologically, residues 30 to 128 (LEKNIIFFFP…KHDENYRPPS (99 aa)) are periplasmic. Residues histidine 120 and tyrosine 124 each coordinate heme.

Belongs to the CcmE/CycJ family.

It localises to the cell inner membrane. In terms of biological role, heme chaperone required for the biogenesis of c-type cytochromes. Transiently binds heme delivered by CcmC and transfers the heme to apo-cytochromes in a process facilitated by CcmF and CcmH. This chain is Cytochrome c-type biogenesis protein CcmE, found in Rickettsia prowazekii (strain Madrid E).